Here is a 299-residue protein sequence, read N- to C-terminus: Protoheme IX farnesyltransferase 1 (299 aa).

Transmembrane regions (helical) follow at residues 24–44 (VVAL…PGVP), 46–66 (AAVV…AAMV), 97–117 (LLVA…CCNA), 118–138 (LTAW…TLLL), 146–166 (IVIG…AVNG), 170–190 (AFAL…FWAL), 217–237 (LSIV…VALG), 239–259 (AGAI…FLAV), and 278–298 (IWYL…LIPL).

The protein belongs to the UbiA prenyltransferase family. Protoheme IX farnesyltransferase subfamily.

It localises to the cell inner membrane. The catalysed reaction is heme b + (2E,6E)-farnesyl diphosphate + H2O = Fe(II)-heme o + diphosphate. It functions in the pathway porphyrin-containing compound metabolism; heme O biosynthesis; heme O from protoheme: step 1/1. In terms of biological role, converts heme B (protoheme IX) to heme O by substitution of the vinyl group on carbon 2 of heme B porphyrin ring with a hydroxyethyl farnesyl side group. The sequence is that of Protoheme IX farnesyltransferase 1 from Chromobacterium violaceum (strain ATCC 12472 / DSM 30191 / JCM 1249 / CCUG 213 / NBRC 12614 / NCIMB 9131 / NCTC 9757 / MK).